A 453-amino-acid chain; its full sequence is Phenylalanine-4-hydroxylase (453 aa).

An N-acetylalanine modification is found at alanine 2. Serine 16 carries the post-translational modification Phosphoserine. Positions serine 36–glutamate 114 constitute an ACT domain. Positions 285, 290, and 330 each coordinate Fe cation.

It belongs to the biopterin-dependent aromatic amino acid hydroxylase family. In terms of assembly, homodimer and homotetramer. Requires Fe(2+) as cofactor. Post-translationally, phosphorylation at Ser-16 increases basal activity and facilitates activation by the substrate phenylalanine.

It carries out the reaction (6R)-L-erythro-5,6,7,8-tetrahydrobiopterin + L-phenylalanine + O2 = (4aS,6R)-4a-hydroxy-L-erythro-5,6,7,8-tetrahydrobiopterin + L-tyrosine. Its pathway is amino-acid degradation; L-phenylalanine degradation; acetoacetate and fumarate from L-phenylalanine: step 1/6. N-terminal region of PAH is thought to contain allosteric binding sites for phenylalanine and to constitute an 'inhibitory' domain that regulates the activity of a catalytic domain in the C-terminal portion of the molecule. Its function is as follows. Catalyzes the hydroxylation of L-phenylalanine to L-tyrosine. This is Phenylalanine-4-hydroxylase (Pah) from Mus musculus (Mouse).